The primary structure comprises 347 residues: MNSGFYLHESLVFFLLTVFALAFILGIFLGKPVIRWLKKRNHYDQVQKEYCEKLEVLHQDKKYTPTAGGILFFIVLLLTIFFWLPLGKLSTWLFAFLIISWSSLGWYDDIVKKRKKKGHGISAKQKFVLQLLISAVITTAVMYIYKGTSLFYTLRVPFFGSVSLGHSVLGQVFYFILAVLAIVGTGNAVNLTDGLDGLAAGTTCMCAFGLLVVAVTSTTIPLATDIPVLLTALLGVSLAFLKYNCSPAQVFMGDTGSLLIGGVLGSCAVMLRAELLLILLGGVFVAEAGSVILQIASCRFRKKRIFLCSPLHHHYEYKGVSETQVVKRFWTAGFFCMVFGIIAALWR.

Helical transmembrane passes span 10 to 30 (SLVF…IFLG), 67 to 87 (AGGI…LPLG), 91 to 111 (TWLF…DDIV), 127 to 147 (FVLQ…IYKG), 164 to 184 (LGHS…AIVG), 195 to 215 (LDGL…VVAV), 220 to 240 (IPLA…SLAF), 250 to 270 (VFMG…CAVM), 275 to 295 (LLLI…ILQI), and 325 to 345 (VVKR…IAAL).

Belongs to the glycosyltransferase 4 family. MraY subfamily. Requires Mg(2+) as cofactor.

It is found in the cell inner membrane. The enzyme catalyses UDP-N-acetyl-alpha-D-muramoyl-L-alanyl-gamma-D-glutamyl-meso-2,6-diaminopimeloyl-D-alanyl-D-alanine + di-trans,octa-cis-undecaprenyl phosphate = di-trans,octa-cis-undecaprenyl diphospho-N-acetyl-alpha-D-muramoyl-L-alanyl-D-glutamyl-meso-2,6-diaminopimeloyl-D-alanyl-D-alanine + UMP. Its pathway is cell wall biogenesis; peptidoglycan biosynthesis. Functionally, catalyzes the initial step of the lipid cycle reactions in the biosynthesis of the cell wall peptidoglycan: transfers peptidoglycan precursor phospho-MurNAc-pentapeptide from UDP-MurNAc-pentapeptide onto the lipid carrier undecaprenyl phosphate, yielding undecaprenyl-pyrophosphoryl-MurNAc-pentapeptide, known as lipid I. This chain is Phospho-N-acetylmuramoyl-pentapeptide-transferase, found in Chlamydia abortus (strain DSM 27085 / S26/3) (Chlamydophila abortus).